The following is a 174-amino-acid chain: Inosine/xanthosine triphosphatase (174 aa).

Residue aspartate 68 participates in Mg(2+) binding. Substrate is bound at residue 68 to 69 (DA).

It belongs to the YjjX NTPase family. As to quaternary structure, homodimer. Mg(2+) is required as a cofactor. Requires Mn(2+) as cofactor.

It carries out the reaction XTP + H2O = XDP + phosphate + H(+). The enzyme catalyses ITP + H2O = IDP + phosphate + H(+). Functionally, phosphatase that hydrolyzes non-canonical purine nucleotides such as XTP and ITP to their respective diphosphate derivatives. Probably excludes non-canonical purines from DNA/RNA precursor pool, thus preventing their incorporation into DNA/RNA and avoiding chromosomal lesions. The polypeptide is Inosine/xanthosine triphosphatase (Photobacterium profundum (strain SS9)).